A 458-amino-acid polypeptide reads, in one-letter code: Argininosuccinate lyase (458 aa).

This sequence belongs to the lyase 1 family. Argininosuccinate lyase subfamily.

It is found in the cytoplasm. It carries out the reaction 2-(N(omega)-L-arginino)succinate = fumarate + L-arginine. Its pathway is amino-acid biosynthesis; L-arginine biosynthesis; L-arginine from L-ornithine and carbamoyl phosphate: step 3/3. The polypeptide is Argininosuccinate lyase (Salmonella choleraesuis (strain SC-B67)).